The chain runs to 140 residues: Biopolymer transport protein exbD1 (140 aa).

At 1–16 the chain is on the cytoplasmic side; sequence MAFSSGNSGGPMADIN. The chain crosses the membrane as a helical span at residues 17 to 37; that stretch reads VTPLVDVMLVLLIIFIITAPL. At 38 to 140 the chain is on the periplasmic side; it reads MSHKVKVELP…GFVATKEKGQ (103 aa).

This sequence belongs to the ExbD/TolR family. As to quaternary structure, the accessory proteins ExbB and ExbD seem to form a complex with TonB.

It is found in the cell inner membrane. Functionally, involved in the TonB-dependent energy-dependent transport of various receptor-bound substrates. This Xanthomonas campestris pv. campestris (strain B100) protein is Biopolymer transport protein exbD1 (exbD1).